The sequence spans 412 residues: Serine hydroxymethyltransferase (412 aa).

Residues leucine 117 and 121–123 each bind (6S)-5,6,7,8-tetrahydrofolate; that span reads GHL. An N6-(pyridoxal phosphate)lysine modification is found at lysine 226. (6S)-5,6,7,8-tetrahydrofolate contacts are provided by residues glutamate 242 and 350-352; that span reads SPF.

Belongs to the SHMT family. In terms of assembly, homodimer. Requires pyridoxal 5'-phosphate as cofactor.

It is found in the cytoplasm. The enzyme catalyses (6R)-5,10-methylene-5,6,7,8-tetrahydrofolate + glycine + H2O = (6S)-5,6,7,8-tetrahydrofolate + L-serine. It functions in the pathway one-carbon metabolism; tetrahydrofolate interconversion. It participates in amino-acid biosynthesis; glycine biosynthesis; glycine from L-serine: step 1/1. In terms of biological role, catalyzes the reversible interconversion of serine and glycine with tetrahydrofolate (THF) serving as the one-carbon carrier. Also exhibits THF-independent aldolase activity toward beta-hydroxyamino acids, producing glycine and aldehydes, via a retro-aldol mechanism. In Methanosarcina acetivorans (strain ATCC 35395 / DSM 2834 / JCM 12185 / C2A), this protein is Serine hydroxymethyltransferase.